Here is a 454-residue protein sequence, read N- to C-terminus: UPF0210 protein BLA_0552 (454 aa).

Belongs to the UPF0210 family. In terms of assembly, homodimer.

This chain is UPF0210 protein BLA_0552, found in Bifidobacterium animalis subsp. lactis (strain AD011).